A 48-amino-acid polypeptide reads, in one-letter code: Cytochrome b559 subunit beta (48 aa).

Residues 23 to 39 (WLAVHALAIPSVFFLGA) traverse the membrane as a helical segment. H27 lines the heme pocket.

It belongs to the PsbE/PsbF family. As to quaternary structure, heterodimer of an alpha subunit and a beta subunit. PSII is composed of 1 copy each of membrane proteins PsbA, PsbB, PsbC, PsbD, PsbE, PsbF, PsbH, PsbI, PsbJ, PsbK, PsbL, PsbM, PsbT, PsbX, PsbY, Psb30/Ycf12, peripheral proteins PsbO, CyanoQ (PsbQ), PsbU, PsbV and a large number of cofactors. It forms dimeric complexes. Heme b is required as a cofactor.

The protein localises to the cellular thylakoid membrane. This b-type cytochrome is tightly associated with the reaction center of photosystem II (PSII). PSII is a light-driven water:plastoquinone oxidoreductase that uses light energy to abstract electrons from H(2)O, generating O(2) and a proton gradient subsequently used for ATP formation. It consists of a core antenna complex that captures photons, and an electron transfer chain that converts photonic excitation into a charge separation. This is Cytochrome b559 subunit beta from Prochlorococcus marinus (strain MIT 9515).